The chain runs to 509 residues: Probable malate:quinone oxidoreductase (509 aa).

The interval 490–509 (LGLNEKEPVSGASEKELVYS) is disordered. The segment covering 493 to 509 (NEKEPVSGASEKELVYS) has biased composition (basic and acidic residues).

It belongs to the MQO family. It depends on FAD as a cofactor.

It catalyses the reaction (S)-malate + a quinone = a quinol + oxaloacetate. It participates in carbohydrate metabolism; tricarboxylic acid cycle; oxaloacetate from (S)-malate (quinone route): step 1/1. The chain is Probable malate:quinone oxidoreductase from Geobacillus sp. (strain WCH70).